Reading from the N-terminus, the 525-residue chain is Probable protein kinase UbiB (525 aa).

Positions 118–500 (DFERVPVASA…QKRTNRLLQG (383 aa)) constitute a Protein kinase domain. Residues 124–132 (VASASIAQV) and K150 each bind ATP. D285 acts as the Proton acceptor in catalysis. The helical transmembrane segment at 501-521 (LLLFGVAVGVGAVLARAFLAL) threads the bilayer.

Belongs to the ABC1 family. UbiB subfamily.

The protein resides in the cell inner membrane. It participates in cofactor biosynthesis; ubiquinone biosynthesis [regulation]. Functionally, is probably a protein kinase regulator of UbiI activity which is involved in aerobic coenzyme Q (ubiquinone) biosynthesis. This chain is Probable protein kinase UbiB, found in Paraburkholderia phytofirmans (strain DSM 17436 / LMG 22146 / PsJN) (Burkholderia phytofirmans).